We begin with the raw amino-acid sequence, 306 residues long: Pantothenate kinase (306 aa).

Residue 91 to 98 (GSVAVGKS) participates in ATP binding.

Belongs to the prokaryotic pantothenate kinase family.

The protein resides in the cytoplasm. The catalysed reaction is (R)-pantothenate + ATP = (R)-4'-phosphopantothenate + ADP + H(+). It participates in cofactor biosynthesis; coenzyme A biosynthesis; CoA from (R)-pantothenate: step 1/5. This is Pantothenate kinase from Streptococcus pneumoniae (strain 70585).